We begin with the raw amino-acid sequence, 132 residues long: Small ribosomal subunit protein uS8c (132 aa).

It belongs to the universal ribosomal protein uS8 family. As to quaternary structure, part of the 30S ribosomal subunit.

The protein localises to the plastid. Its subcellular location is the chloroplast. Functionally, one of the primary rRNA binding proteins, it binds directly to 16S rRNA central domain where it helps coordinate assembly of the platform of the 30S subunit. This is Small ribosomal subunit protein uS8c (rps8) from Psilotum nudum (Whisk fern).